Consider the following 1129-residue polypeptide: Tyrosine-protein kinase JAK2 (1129 aa).

The region spanning 35–378 is the FERM domain; the sequence is PLLQVYLYYS…GYYRLTADAH (344 aa). Position 117 is a phosphotyrosine; by autocatalysis (Y117). Positions 399-480 constitute an SH2; atypical domain; sequence HGPIFMDFAI…NLKDLLTCYQ (82 aa). Protein kinase domains are found at residues 542-806 and 846-1118; these read LIFE…NSLF and LKFL…DLAQ. 852 to 860 contributes to the ATP binding site; the sequence is LGKGNFGSV. The residue at position 865 (Y865) is a Phosphotyrosine; by autocatalysis. K879 serves as a coordination point for ATP. Y963 and Y969 each carry phosphotyrosine; by autocatalysis. Catalysis depends on D973, which acts as the Proton acceptor. Phosphotyrosine; by autocatalysis occurs at positions 1004 and 1005.

Belongs to the protein kinase superfamily. Tyr protein kinase family. JAK subfamily. In terms of processing, autophosphorylated, leading to regulate its activity.

Its subcellular location is the endomembrane system. It is found in the nucleus. The enzyme catalyses L-tyrosyl-[protein] + ATP = O-phospho-L-tyrosyl-[protein] + ADP + H(+). Regulated by autophosphorylation, can both activate or decrease activity. Heme regulates its activity by enhancing the phosphorylation on Tyr-1004 and Tyr-1005. In terms of biological role, non-receptor tyrosine kinase involved in various processes such as cell growth, development, differentiation or histone modifications. Mediates essential signaling events in both innate and adaptive immunity. In the cytoplasm, plays a pivotal role in signal transduction via its association with cytokine receptors. Following ligand-binding to cell surface receptors, phosphorylates specific tyrosine residues on the cytoplasmic tails of the receptor, creating docking sites for STATs proteins. Subsequently, phosphorylates the STATs proteins once they are recruited to the receptor. Phosphorylated STATs then form homodimer or heterodimers and translocate to the nucleus to activate gene transcription. For example, cell stimulation with erythropoietin (EPO) during erythropoiesis leads to JAK2 autophosphorylation, activation, and its association with erythropoietin receptor (EPOR) that becomes phosphorylated in its cytoplasmic domain. Then, STAT5 (STAT5A or STAT5B) is recruited, phosphorylated and activated by JAK2. Once activated, dimerized STAT5 translocates into the nucleus and promotes the transcription of several essential genes involved in the modulation of erythropoiesis. Part of a signaling cascade that is activated by increased cellular retinol and that leads to the activation of STAT5 (STAT5A or STAT5B). In the nucleus, plays a key role in chromatin by specifically mediating phosphorylation of 'Tyr-41' of histone H3 (H3Y41ph), a specific tag that promotes exclusion of CBX5 (HP1 alpha) from chromatin. Up-regulates the potassium voltage-gated channel activity of KCNA3. In Gallus gallus (Chicken), this protein is Tyrosine-protein kinase JAK2.